A 373-amino-acid chain; its full sequence is COP9 signalosome complex subunit 5 (373 aa).

An MPN domain is found at 66-201; the sequence is CLISRLATTK…IGAFRTLPSK (136 aa). Residues histidine 147, histidine 149, and aspartate 160 each contribute to the Zn(2+) site. The short motif at 147–160 is the JAMM motif element; it reads HSHPGYGCWLSNID. The tract at residues 289 to 325 is disordered; that stretch reads FTHERSNSISSTSSLTTRHTTDVEMDDQESAQSSLDI. Residues 295 to 306 show a composition bias toward low complexity; that stretch reads NSISSTSSLTTR.

The protein belongs to the peptidase M67A family. CSN5 subfamily. In terms of assembly, component of the COP9 signalosome (CSN) complex.

The protein localises to the cytoplasm. Its subcellular location is the nucleus. Catalytic Component of the COP9 signalosome (CSN) complex that acts as an regulator of the ubiquitin (Ubl) conjugation pathway by mediating the deneddylation of the cullin subunit of SCF-type E3 ubiquitin-protein ligase complexes. The CNS complex is involved in the regulation of the mating pheromone response. The chain is COP9 signalosome complex subunit 5 (RRI1) from Kluyveromyces lactis (strain ATCC 8585 / CBS 2359 / DSM 70799 / NBRC 1267 / NRRL Y-1140 / WM37) (Yeast).